A 92-amino-acid chain; its full sequence is Large ribosomal subunit protein eL43 (92 aa).

A C4-type zinc finger spans residues 39 to 60 (CDFCGKYGMKRQAVGIWCCKGC).

The protein belongs to the eukaryotic ribosomal protein eL43 family.

In Ostreococcus tauri, this protein is Large ribosomal subunit protein eL43 (RPL37a).